Reading from the N-terminus, the 342-residue chain is MTVKPLRDVTPKPLEGEERLEQSLRPATFDDYVGQVKIVDNVKVYAAAARQRGESLDHVLLSGPPGLGKTSLAHILARELGVTLHVTSGPALVKKGDLAGLLTALAPRDILFIDEIHRLSPAVEEALYPAMEDYRFDVVLGAGLGAQTMEMKLERFTLVGATTRTGLLASPLRDRFPIQERLEYYGPAELKEIAVRAARKLGLPVDEDGAEELARRARGTPRIAIRLLQRARDFAQVEGDGRLTREVVDRTLRRLEVDARGLDAMDRRILAAVIDTFGGGPVGIDAVAAAVGEESGTLEDVYEPFLVREGYLARTPRGRVALPAAYAHLGRDRPGGKQGSLV.

The tract at residues 1-185 (MTVKPLRDVT…FPIQERLEYY (185 aa)) is large ATPase domain (RuvB-L). ATP is bound by residues L24, R25, G66, K69, T70, S71, 132-134 (EDY), R175, Y185, and R222. T70 provides a ligand contact to Mg(2+). Residues 186–256 (GPAELKEIAV…VVDRTLRRLE (71 aa)) form a small ATPAse domain (RuvB-S) region. The tract at residues 259-342 (ARGLDAMDRR…RPGGKQGSLV (84 aa)) is head domain (RuvB-H). Residues R314 and R319 each coordinate DNA.

It belongs to the RuvB family. Homohexamer. Forms an RuvA(8)-RuvB(12)-Holliday junction (HJ) complex. HJ DNA is sandwiched between 2 RuvA tetramers; dsDNA enters through RuvA and exits via RuvB. An RuvB hexamer assembles on each DNA strand where it exits the tetramer. Each RuvB hexamer is contacted by two RuvA subunits (via domain III) on 2 adjacent RuvB subunits; this complex drives branch migration. In the full resolvosome a probable DNA-RuvA(4)-RuvB(12)-RuvC(2) complex forms which resolves the HJ.

It localises to the cytoplasm. It catalyses the reaction ATP + H2O = ADP + phosphate + H(+). The RuvA-RuvB-RuvC complex processes Holliday junction (HJ) DNA during genetic recombination and DNA repair, while the RuvA-RuvB complex plays an important role in the rescue of blocked DNA replication forks via replication fork reversal (RFR). RuvA specifically binds to HJ cruciform DNA, conferring on it an open structure. The RuvB hexamer acts as an ATP-dependent pump, pulling dsDNA into and through the RuvAB complex. RuvB forms 2 homohexamers on either side of HJ DNA bound by 1 or 2 RuvA tetramers; 4 subunits per hexamer contact DNA at a time. Coordinated motions by a converter formed by DNA-disengaged RuvB subunits stimulates ATP hydrolysis and nucleotide exchange. Immobilization of the converter enables RuvB to convert the ATP-contained energy into a lever motion, pulling 2 nucleotides of DNA out of the RuvA tetramer per ATP hydrolyzed, thus driving DNA branch migration. The RuvB motors rotate together with the DNA substrate, which together with the progressing nucleotide cycle form the mechanistic basis for DNA recombination by continuous HJ branch migration. Branch migration allows RuvC to scan DNA until it finds its consensus sequence, where it cleaves and resolves cruciform DNA. The polypeptide is Holliday junction branch migration complex subunit RuvB (Anaeromyxobacter sp. (strain K)).